A 297-amino-acid polypeptide reads, in one-letter code: MNADLTVVSPQIQAQILAEALPYIRKFHGKTIVVKYGGNAMTEERLKHGFARDVILLKLVGMNPVVVHGGGPQIDNALKKIGKQGTFVQGMRITDEETMEVVEWVLGGEVQQDIVMLINHYGGQAVGLTGKDGGLIRAKKMQMPDKEHPGQFLDIGFVGDIEAINPAVVKALQDDAFIPIISPIGFGDDGQAYNINADVVAGKIAEILKAEKLIMMTNIAGVQDKQGNLLTDLSAREIDEMFEDGTISGGMLPKISSALDAAKSGVNTVHIIDGRIEHSLLLEVLTEQAFGTMIRSH.

Residues 70 to 71 (GG), Arg-92, and Asn-194 contribute to the substrate site.

It belongs to the acetylglutamate kinase family. ArgB subfamily.

It is found in the cytoplasm. It catalyses the reaction N-acetyl-L-glutamate + ATP = N-acetyl-L-glutamyl 5-phosphate + ADP. Its pathway is amino-acid biosynthesis; L-arginine biosynthesis; N(2)-acetyl-L-ornithine from L-glutamate: step 2/4. Catalyzes the ATP-dependent phosphorylation of N-acetyl-L-glutamate. The chain is Acetylglutamate kinase from Janthinobacterium sp. (strain Marseille) (Minibacterium massiliensis).